The sequence spans 473 residues: Adenosylhomocysteinase (473 aa).

The substrate site is built by Thr64, Asp139, and Glu199. 200–202 contributes to the NAD(+) binding site; that stretch reads TTT. Substrate-binding residues include Lys229 and Asp233. Residues Asn234, 263-268, Glu286, Asn321, 342-344, and Asn387 contribute to the NAD(+) site; these read GYGDVG and IGH.

Belongs to the adenosylhomocysteinase family. NAD(+) is required as a cofactor.

The protein resides in the cytoplasm. The catalysed reaction is S-adenosyl-L-homocysteine + H2O = L-homocysteine + adenosine. Its pathway is amino-acid biosynthesis; L-homocysteine biosynthesis; L-homocysteine from S-adenosyl-L-homocysteine: step 1/1. In terms of biological role, may play a key role in the regulation of the intracellular concentration of adenosylhomocysteine. This chain is Adenosylhomocysteinase, found in Paraburkholderia phytofirmans (strain DSM 17436 / LMG 22146 / PsJN) (Burkholderia phytofirmans).